A 287-amino-acid polypeptide reads, in one-letter code: Iron-sulfur cluster carrier protein (287 aa).

47-54 (GKGGVGKS) contacts ATP.

It belongs to the Mrp/NBP35 ATP-binding proteins family. As to quaternary structure, homodimer.

Binds and transfers iron-sulfur (Fe-S) clusters to target apoproteins. Can hydrolyze ATP. This Pseudomonas fragi protein is Iron-sulfur cluster carrier protein.